The primary structure comprises 635 residues: Threonine--tRNA ligase (635 aa).

One can recognise a TGS domain in the interval 1-61 (MINISFPDGS…DNDCRLRILT (61 aa)). The catalytic stretch occupies residues 242–533 (DHRKLGKELD…LIEEYAGRFP (292 aa)). Zn(2+) is bound by residues C333, H384, and H510.

Belongs to the class-II aminoacyl-tRNA synthetase family. As to quaternary structure, homodimer. The cofactor is Zn(2+).

The protein localises to the cytoplasm. It carries out the reaction tRNA(Thr) + L-threonine + ATP = L-threonyl-tRNA(Thr) + AMP + diphosphate + H(+). In terms of biological role, catalyzes the attachment of threonine to tRNA(Thr) in a two-step reaction: L-threonine is first activated by ATP to form Thr-AMP and then transferred to the acceptor end of tRNA(Thr). Also edits incorrectly charged L-seryl-tRNA(Thr). The sequence is that of Threonine--tRNA ligase from Rickettsia bellii (strain RML369-C).